The primary structure comprises 523 residues: MTNIHHHKILILDFGSQYTQLIARRVREIGVYCELWAWDVTEEQIREFNPTGIILSGGPESTTEANSPRAPEYVFNAGVPVLGICYGMQTMAMQLGGLTETSTHREFGYAEVSLRNPTALFDHLNDDATTSQTTLDVWMSHGDKVTRLPDNFQITGMTSTCPIAAMSDESRRFYGVQFHPEVTHTKCGQKLLQNFVVDICGCETNWTAENIIEDAVARIKAQVGGDEVILGLSGGVDSSVTALLLHRAIGKNLHCVFVDNGLLRLNEGDQVMEMFGDKFGLNIIRVEAEDRFLEALKGIDEPEAKRKTIGKVFVDVFDDEAKKLTDVKWLAQGTIYPDVIESAASKTGKAHVIKSHHNVGGLPDYMKLGLVEPLRELFKDEVRKIGLALGLPAEMLNRHPFPGPGLGVRVLGEIKKEYCDLLRKADAIFIEELHKADWYYKVSQAFSVFLPVKSVGVMGDGRKYDWVISLRAVETIDFMTAHWANLPYDLLGKISNRIINEVNSISRVVYDISGKPPATIEWE.

The 198-residue stretch at Lys-8–Asn-205 folds into the Glutamine amidotransferase type-1 domain. The Nucleophile role is filled by Cys-85. Residues His-179 and Glu-181 contribute to the active site. The GMPS ATP-PPase domain maps to Trp-206–Arg-398. ATP is bound at residue Ser-233–Ser-239.

In terms of assembly, homodimer.

The enzyme catalyses XMP + L-glutamine + ATP + H2O = GMP + L-glutamate + AMP + diphosphate + 2 H(+). It functions in the pathway purine metabolism; GMP biosynthesis; GMP from XMP (L-Gln route): step 1/1. Functionally, catalyzes the synthesis of GMP from XMP. This chain is GMP synthase [glutamine-hydrolyzing], found in Histophilus somni (strain 129Pt) (Haemophilus somnus).